A 130-amino-acid polypeptide reads, in one-letter code: uncharacterized protein (130 aa).

The chain crosses the membrane as a helical span at residues 8–28; the sequence is PFILMIIVLGLFLVSIGGYYY.

Its subcellular location is the membrane. This is an uncharacterized protein from Bacillus anthracis.